A 343-amino-acid polypeptide reads, in one-letter code: Putative KilA-N domain-containing protein R904 (343 aa).

The KilA-N domain maps to 51–157; sequence EFSWGNYLNL…IKASVIINDY (107 aa). Residues 159–279 adopt a coiled-coil conformation; it reads AKQMFKEHEK…NAVKEYKELY (121 aa).

This is Putative KilA-N domain-containing protein R904 from Acanthamoeba polyphaga mimivirus (APMV).